A 255-amino-acid chain; its full sequence is Zinc D-Ala-D-Ala carboxypeptidase (255 aa).

Residues 1–42 (MRPRPIRLLLTALVGAGLAFAPVSAVAAPTATASASADVGAL) form the signal peptide. The residue at position 43 (Asp-43) is a Blocked amino end (Asp). 2 cysteine pairs are disulfide-bonded: Cys-45–Cys-123 and Cys-136–Cys-184. Arg-180 contributes to the substrate binding site. Residue His-196 participates in Zn(2+) binding. Cys-212 and Cys-253 are joined by a disulfide. The Proton donor role is filled by His-234. Zn(2+) is bound by residues His-237 and His-239.

Belongs to the peptidase M15 family. The cofactor is Zn(2+). The N-terminus is partially blocked as a result of the cyclization of the first two amino acids into anhydroaspartylglycine imide.

Its subcellular location is the secreted. The enzyme catalyses Cleavage of the bond: (Ac)2-L-lysyl-D-alanyl-|-D-alanine.. Its function is as follows. This enzyme catalyzes carboxypeptidation and transpeptidation reactions involved in bacterial cell wall metabolism. It effectively catalyzes the transfer of the N-alpha, N-epsilon-diacetyl-L-lysyl-D-alanyl electrophilic group of the standard tripeptide substrate N-alpha,N-epsilon-diacetyl-L-lysyl-D-alanyl-D-alanine to water. It also performs a weak beta-lactamase activity, hydrolyzing penicillin into penicilloate at a very low rate. This is Zinc D-Ala-D-Ala carboxypeptidase from Streptomyces albus G.